The chain runs to 642 residues: Threonine--tRNA ligase (642 aa).

A TGS domain is found at 1–61 (MPIITLPDGS…EHDASLEIIT (61 aa)). The catalytic stretch occupies residues 244-535 (DHRKIGKQLD…LIEEYAGFFP (292 aa)). Zn(2+) is bound by residues Cys335, His386, and His512.

The protein belongs to the class-II aminoacyl-tRNA synthetase family. Homodimer. It depends on Zn(2+) as a cofactor.

The protein localises to the cytoplasm. The catalysed reaction is tRNA(Thr) + L-threonine + ATP = L-threonyl-tRNA(Thr) + AMP + diphosphate + H(+). In terms of biological role, catalyzes the attachment of threonine to tRNA(Thr) in a two-step reaction: L-threonine is first activated by ATP to form Thr-AMP and then transferred to the acceptor end of tRNA(Thr). Also edits incorrectly charged L-seryl-tRNA(Thr). The chain is Threonine--tRNA ligase from Vibrio cholerae serotype O1 (strain M66-2).